The following is a 218-amino-acid chain: Large ribosomal subunit protein bL25 (218 aa).

The protein belongs to the bacterial ribosomal protein bL25 family. CTC subfamily. Part of the 50S ribosomal subunit; part of the 5S rRNA/L5/L18/L25 subcomplex. Contacts the 5S rRNA. Binds to the 5S rRNA independently of L5 and L18.

Its function is as follows. This is one of the proteins that binds to the 5S RNA in the ribosome where it forms part of the central protuberance. The sequence is that of Large ribosomal subunit protein bL25 from Gluconobacter oxydans (strain 621H) (Gluconobacter suboxydans).